The following is a 63-amino-acid chain: Hirudin-P6 (63 aa).

Positions 1 to 3 (MRY) are interaction with thrombin active site. Disulfide bonds link Cys6/Cys14, Cys16/Cys28, and Cys22/Cys37. A compositionally biased stretch (basic and acidic residues) spans 35–55 (KKCVEGEGTRKPQNEGQHDFD). The segment at 35–63 (KKCVEGEGTRKPQNEGQHDFDPIPEEYLS) is disordered. An O-linked (GalNAc...) threonine glycan is attached at Thr43. Positions 53–63 (DFDPIPEEYLS) are interaction with fibrinogen-binding exosite of thrombin. Tyr61 carries the sulfotyrosine modification.

The protein belongs to the protease inhibitor I14 (hirudin) family. Post-translationally, O-linked glycan consists of Fuc-Gal-GalNAc trisaccharide.

The protein resides in the secreted. Its function is as follows. Hirudin is a potent thrombin-specific protease inhibitor. It forms a stable non-covalent complex with alpha-thrombin, thereby abolishing its ability to cleave fibrinogen. The polypeptide is Hirudin-P6 (Hirudinaria manillensis (Asian medical leech)).